A 154-amino-acid polypeptide reads, in one-letter code: Dau c 1 isoallergen Dau c 1.0301 (154 aa).

It belongs to the BetVI family. Expressed in roots.

In Daucus carota (Wild carrot), this protein is Dau c 1 isoallergen Dau c 1.0301.